Reading from the N-terminus, the 188-residue chain is Acireductone dioxygenase (188 aa).

4 residues coordinate Fe(2+): His-97, His-99, Glu-103, and His-141. Ni(2+)-binding residues include His-97, His-99, Glu-103, and His-141.

Belongs to the acireductone dioxygenase (ARD) family. In terms of assembly, monomer. Requires Fe(2+) as cofactor. Ni(2+) serves as cofactor.

The enzyme catalyses 1,2-dihydroxy-5-(methylsulfanyl)pent-1-en-3-one + O2 = 3-(methylsulfanyl)propanoate + CO + formate + 2 H(+). It carries out the reaction 1,2-dihydroxy-5-(methylsulfanyl)pent-1-en-3-one + O2 = 4-methylsulfanyl-2-oxobutanoate + formate + 2 H(+). The protein operates within amino-acid biosynthesis; L-methionine biosynthesis via salvage pathway; L-methionine from S-methyl-5-thio-alpha-D-ribose 1-phosphate: step 5/6. Catalyzes 2 different reactions between oxygen and the acireductone 1,2-dihydroxy-3-keto-5-methylthiopentene (DHK-MTPene) depending upon the metal bound in the active site. Fe-containing acireductone dioxygenase (Fe-ARD) produces formate and 2-keto-4-methylthiobutyrate (KMTB), the alpha-ketoacid precursor of methionine in the methionine recycle pathway. Ni-containing acireductone dioxygenase (Ni-ARD) produces methylthiopropionate, carbon monoxide and formate, and does not lie on the methionine recycle pathway. The chain is Acireductone dioxygenase from Gluconobacter oxydans (strain 621H) (Gluconobacter suboxydans).